Reading from the N-terminus, the 530-residue chain is Pre-mRNA-splicing factor PRP9 (530 aa).

The segment at 280 to 310 adopts a Matrin-type 1 zinc-finger fold; the sequence is IYCPFCSRWFKTSSVFESHLVGKIHKKNESK. Residues 367 to 388 are disordered; the sequence is DSTEKEGAEQVDGEQRDGQLQE. Residues 368–388 are compositionally biased toward basic and acidic residues; the sequence is STEKEGAEQVDGEQRDGQLQE. Residues 421–452 form a Matrin-type 2 zinc finger; the sequence is YRCEICSNKVYNGRRTFERHFNEERHIYHLRC. The segment at 488-516 is disordered; the sequence is AVPPKPNPSQLKVPTELELEEEDEEGNVM. Residues 504-513 are compositionally biased toward acidic residues; the sequence is LELEEEDEEG.

Belongs to the SF3A3 family. In terms of assembly, belongs to the CWC complex (or CEF1-associated complex), a spliceosome sub-complex reminiscent of a late-stage spliceosome composed of the U2, U5 and U6 snRNAs and at least BUD13, BUD31, BRR2, CDC40, CEF1, CLF1, CUS1, CWC2, CWC15, CWC21, CWC22, CWC23, CWC24, CWC25, CWC27, ECM2, HSH155, IST3, ISY1, LEA1, MSL1, NTC20, PRP8, PRP9, PRP11, PRP19, PRP21, PRP22, PRP45, PRP46, SLU7, SMB1, SMD1, SMD2, SMD3, SMX2, SMX3, SNT309, SNU114, SPP2, SYF1, SYF2, RSE1 and YJU2.

The protein localises to the nucleus. Its function is as follows. mRNA splicing factors, PRP9, PRP11, and PRP21, are necessary for binding of the U2 snRNP to the pre-mRNA in an early step of spliceosome assembly. The sequence is that of Pre-mRNA-splicing factor PRP9 (PRP9) from Saccharomyces cerevisiae (strain ATCC 204508 / S288c) (Baker's yeast).